Consider the following 105-residue polypeptide: MSNGAADRARLRHLDHCRQPHCFARDICVFTYFELPEEHPQGPAHGVRITVEKGIDTHLIKFFTKRPLLVEKDQGNTILTLYCICPVPGLHEDFCCHLCAEFNHL.

Belongs to the adenoviridae E3A-2 family.

In terms of biological role, not yet known. In Human adenovirus A serotype 12 (HAdV-12), this protein is Early E3A 12.1 kDa protein.